The sequence spans 194 residues: Protein GrpE 2 (194 aa).

A compositionally biased stretch (basic and acidic residues) spans M1–N17. The interval M1 to V29 is disordered. Positions D18 to V29 are enriched in polar residues.

This sequence belongs to the GrpE family. As to quaternary structure, homodimer.

The protein resides in the cytoplasm. Functionally, participates actively in the response to hyperosmotic and heat shock by preventing the aggregation of stress-denatured proteins, in association with DnaK and GrpE. It is the nucleotide exchange factor for DnaK and may function as a thermosensor. Unfolded proteins bind initially to DnaJ; upon interaction with the DnaJ-bound protein, DnaK hydrolyzes its bound ATP, resulting in the formation of a stable complex. GrpE releases ADP from DnaK; ATP binding to DnaK triggers the release of the substrate protein, thus completing the reaction cycle. Several rounds of ATP-dependent interactions between DnaJ, DnaK and GrpE are required for fully efficient folding. This chain is Protein GrpE 2, found in Buchnera aphidicola subsp. Baizongia pistaciae (strain Bp).